We begin with the raw amino-acid sequence, 174 residues long: Probable inosine/xanthosine triphosphatase (174 aa).

Asp63 contributes to the Mg(2+) binding site.

The protein belongs to the YjjX NTPase family. Homodimer. It depends on Mg(2+) as a cofactor. The cofactor is Mn(2+).

The catalysed reaction is XTP + H2O = XDP + phosphate + H(+). The enzyme catalyses ITP + H2O = IDP + phosphate + H(+). Phosphatase that hydrolyzes non-canonical purine nucleotides such as XTP and ITP to their respective diphosphate derivatives. Probably excludes non-canonical purines from DNA/RNA precursor pool, thus preventing their incorporation into DNA/RNA and avoiding chromosomal lesions. The protein is Probable inosine/xanthosine triphosphatase of Methanocella arvoryzae (strain DSM 22066 / NBRC 105507 / MRE50).